Here is a 165-residue protein sequence, read N- to C-terminus: uncharacterized protein (165 aa).

6 helical membrane passes run 6–26 (ILFP…SGQA), 28–48 (LFSG…AFVY), 54–74 (AVTP…HFFA), 78–98 (WVWW…SLLV), 110–130 (AVSM…MAWL), and 138–158 (ALLK…LLLI).

It is found in the cell membrane. This is an uncharacterized protein from Bacillus subtilis (strain 168).